Here is a 21-residue protein sequence, read N- to C-terminus: MIPAAFDYVAPSTVDEAVQAL.

As to quaternary structure, heterotrimer composed of an alpha, a beta and a gamma chain.

The sequence is that of Formate ester dehydrogenase beta chain from Amycolatopsis methanolica.